A 239-amino-acid chain; its full sequence is tRNA (guanine-N(1)-)-methyltransferase (239 aa).

S-adenosyl-L-methionine contacts are provided by residues Gly-110 and 129–134; that span reads LGDFVL.

Belongs to the RNA methyltransferase TrmD family. As to quaternary structure, homodimer.

The protein localises to the cytoplasm. It catalyses the reaction guanosine(37) in tRNA + S-adenosyl-L-methionine = N(1)-methylguanosine(37) in tRNA + S-adenosyl-L-homocysteine + H(+). Functionally, specifically methylates guanosine-37 in various tRNAs. The polypeptide is tRNA (guanine-N(1)-)-methyltransferase (Clostridium beijerinckii (strain ATCC 51743 / NCIMB 8052) (Clostridium acetobutylicum)).